Here is a 380-residue protein sequence, read N- to C-terminus: UDP-N-acetylglucosamine--N-acetylmuramyl-(pentapeptide) pyrophosphoryl-undecaprenol N-acetylglucosamine transferase (380 aa).

UDP-N-acetyl-alpha-D-glucosamine is bound by residues 23–25 (TGG), Asn-137, Arg-178, Ser-210, Ile-266, and Gln-311.

It belongs to the glycosyltransferase 28 family. MurG subfamily.

The protein localises to the cell inner membrane. It carries out the reaction di-trans,octa-cis-undecaprenyl diphospho-N-acetyl-alpha-D-muramoyl-L-alanyl-D-glutamyl-meso-2,6-diaminopimeloyl-D-alanyl-D-alanine + UDP-N-acetyl-alpha-D-glucosamine = di-trans,octa-cis-undecaprenyl diphospho-[N-acetyl-alpha-D-glucosaminyl-(1-&gt;4)]-N-acetyl-alpha-D-muramoyl-L-alanyl-D-glutamyl-meso-2,6-diaminopimeloyl-D-alanyl-D-alanine + UDP + H(+). The protein operates within cell wall biogenesis; peptidoglycan biosynthesis. Its function is as follows. Cell wall formation. Catalyzes the transfer of a GlcNAc subunit on undecaprenyl-pyrophosphoryl-MurNAc-pentapeptide (lipid intermediate I) to form undecaprenyl-pyrophosphoryl-MurNAc-(pentapeptide)GlcNAc (lipid intermediate II). This Bacteroides fragilis (strain ATCC 25285 / DSM 2151 / CCUG 4856 / JCM 11019 / LMG 10263 / NCTC 9343 / Onslow / VPI 2553 / EN-2) protein is UDP-N-acetylglucosamine--N-acetylmuramyl-(pentapeptide) pyrophosphoryl-undecaprenol N-acetylglucosamine transferase.